Consider the following 83-residue polypeptide: Small ribosomal subunit protein bS20 (83 aa).

This sequence belongs to the bacterial ribosomal protein bS20 family.

In terms of biological role, binds directly to 16S ribosomal RNA. The protein is Small ribosomal subunit protein bS20 of Staphylococcus aureus (strain JH1).